The sequence spans 121 residues: MIQQETYLTVADNSGAKRLQCIRVLGSNRRYAHVGDVIVATVKDALPNMGVKKSEVVKAVIVRTKATLRRNTGNSIRFDDNAAVLINEDKNPKGTRVFGPVARELRDKNYTKIVSLAPEVI.

Belongs to the universal ribosomal protein uL14 family. As to quaternary structure, part of the 50S ribosomal subunit. Forms a cluster with proteins L3 and L19. In the 70S ribosome, L14 and L19 interact and together make contacts with the 16S rRNA in bridges B5 and B8.

In terms of biological role, binds to 23S rRNA. Forms part of two intersubunit bridges in the 70S ribosome. In Prochlorococcus marinus (strain MIT 9301), this protein is Large ribosomal subunit protein uL14.